The sequence spans 65 residues: Large ribosomal subunit protein bL35 (65 aa).

Belongs to the bacterial ribosomal protein bL35 family.

This Paraburkholderia xenovorans (strain LB400) protein is Large ribosomal subunit protein bL35.